The following is a 746-amino-acid chain: Protein O-mannosyl-transferase 1 (746 aa).

Transmembrane regions (helical) follow at residues 30–50 (PLVV…LGLL), 90–110 (FGHM…NFLW), 121–141 (VPIW…VPMA), 144–164 (IVLE…LMLI), 176–196 (LLES…LKFF), 228–248 (MGIF…WNLI), and 266–286 (IVAL…VHLM). 3 consecutive MIR domains span residues 318–381 (PLEV…VKDP), 392–449 (PRPV…LDIV), and 453–513 (SNRD…VEEH). 3 N-linked (GlcNAc...) asparagine glycosylation sites follow: Asn435, Asn471, and Asn539. 3 consecutive transmembrane segments (helical) span residues 597–617 (IVIW…FFWY), 636–656 (WVLA…PFFL), and 660–680 (VLFL…LPIV).

This sequence belongs to the glycosyltransferase 39 family.

It is found in the endoplasmic reticulum membrane. The enzyme catalyses a di-trans,poly-cis-dolichyl beta-D-mannosyl phosphate + L-seryl-[protein] = 3-O-(alpha-D-mannosyl)-L-seryl-[protein] + a di-trans,poly-cis-dolichyl phosphate + H(+). It carries out the reaction a di-trans,poly-cis-dolichyl beta-D-mannosyl phosphate + L-threonyl-[protein] = 3-O-(alpha-D-mannosyl)-L-threonyl-[protein] + a di-trans,poly-cis-dolichyl phosphate + H(+). It functions in the pathway protein modification; protein glycosylation. Functionally, transfers mannosyl residues to the hydroxyl group of serine or threonine residues. Coexpression of both POMT1 and POMT2 is necessary for enzyme activity, expression of either POMT1 or POMT2 alone is insufficient. Essentially dedicated to O-mannosylation of alpha-DAG1 and few other proteins but not of cadherins and protocaherins. The chain is Protein O-mannosyl-transferase 1 (Pomt1) from Mus musculus (Mouse).